The sequence spans 423 residues: ATP-dependent RNA helicase RhlB (423 aa).

The short motif at 9-37 (LRFSDLPLHHQVLAALQEKGFDYCTPIQA) is the Q motif element. The region spanning 40-217 (LPMSLAGKDV…FEDMNDPEYV (178 aa)) is the Helicase ATP-binding domain. 53 to 60 (AQTGTGKT) serves as a coordination point for ATP. Residues 163 to 166 (DEAD) carry the DEAD box motif. The Helicase C-terminal domain maps to 241–388 (KMALLLTLLE…VSQYDVAALL (148 aa)). A disordered region spans residues 397-423 (KRGNNNSKNSANSNRTFQKKRSLKRNF). Low complexity predominate over residues 400-410 (NNNSKNSANSN). Positions 413-423 (FQKKRSLKRNF) are enriched in basic residues.

This sequence belongs to the DEAD box helicase family. RhlB subfamily. As to quaternary structure, component of the RNA degradosome, which is a multiprotein complex involved in RNA processing and mRNA degradation.

The protein localises to the cytoplasm. The enzyme catalyses ATP + H2O = ADP + phosphate + H(+). Its function is as follows. DEAD-box RNA helicase involved in RNA degradation. Has RNA-dependent ATPase activity and unwinds double-stranded RNA. The sequence is that of ATP-dependent RNA helicase RhlB from Pasteurella multocida (strain Pm70).